Reading from the N-terminus, the 692-residue chain is Elongation factor G (692 aa).

Positions 8 to 282 (ENTRNIGIMA…AVIDYLPSPL (275 aa)) constitute a tr-type G domain. GTP contacts are provided by residues 17-24 (AHIDAGKT), 81-85 (DTPGH), and 135-138 (NKMD).

The protein belongs to the TRAFAC class translation factor GTPase superfamily. Classic translation factor GTPase family. EF-G/EF-2 subfamily.

The protein localises to the cytoplasm. Catalyzes the GTP-dependent ribosomal translocation step during translation elongation. During this step, the ribosome changes from the pre-translocational (PRE) to the post-translocational (POST) state as the newly formed A-site-bound peptidyl-tRNA and P-site-bound deacylated tRNA move to the P and E sites, respectively. Catalyzes the coordinated movement of the two tRNA molecules, the mRNA and conformational changes in the ribosome. This chain is Elongation factor G, found in Bacillus cereus (strain ATCC 14579 / DSM 31 / CCUG 7414 / JCM 2152 / NBRC 15305 / NCIMB 9373 / NCTC 2599 / NRRL B-3711).